A 239-amino-acid polypeptide reads, in one-letter code: Ribonuclease PH (239 aa).

Phosphate is bound by residues Arg88 and 126–128 (GTR).

Belongs to the RNase PH family. As to quaternary structure, homohexameric ring arranged as a trimer of dimers.

The catalysed reaction is tRNA(n+1) + phosphate = tRNA(n) + a ribonucleoside 5'-diphosphate. Functionally, phosphorolytic 3'-5' exoribonuclease that plays an important role in tRNA 3'-end maturation. Removes nucleotide residues following the 3'-CCA terminus of tRNAs; can also add nucleotides to the ends of RNA molecules by using nucleoside diphosphates as substrates, but this may not be physiologically important. Probably plays a role in initiation of 16S rRNA degradation (leading to ribosome degradation) during starvation. The polypeptide is Ribonuclease PH (Coxiella burnetii (strain Dugway 5J108-111)).